We begin with the raw amino-acid sequence, 811 residues long: DNA mismatch repair protein MutS (811 aa).

583–590 (GPNMAGKS) lines the ATP pocket.

This sequence belongs to the DNA mismatch repair MutS family.

Functionally, this protein is involved in the repair of mismatches in DNA. It is possible that it carries out the mismatch recognition step. This protein has a weak ATPase activity. The chain is DNA mismatch repair protein MutS from Thermus thermophilus (strain ATCC BAA-163 / DSM 7039 / HB27).